Reading from the N-terminus, the 675-residue chain is 1,4-alpha-glucan branching enzyme TK1436 (675 aa).

E183 functions as the Nucleophile in the catalytic mechanism. Substrate-binding residues include R261 and G278. The active-site Proton donor is D354. W407, D467, and Q476 together coordinate substrate. Disordered regions lie at residues 537-563 (PELE…KVLT) and 581-627 (EETR…LSIK). Basic and acidic residues-rich tracts occupy residues 549-563 (PPEK…KVLT) and 581-595 (EETR…EASK). Residues 596–616 (RGKRKSSKSKRLPRKVSKKAP) show a composition bias toward basic residues.

Belongs to the glycosyl hydrolase 57 family. Monomer.

It catalyses the reaction Transfers a segment of a (1-&gt;4)-alpha-D-glucan chain to a primary hydroxy group in a similar glucan chain.. Catalyzes the formation of branch points in alpha-glucans by cleavage of an alpha-1,4 glycosidic bond and subsequent transfer of the cleaved-off oligosaccharide to a new alpha-1,6 position. The branch chain-length distribution of the reaction products shows degree of polymerization (DP) of 5 to 30, with two local maxima at DP 6 and DP 11. Exhibits an alpha-retaining catalytic mechanism. Does not display alpha-galactosidase or pullulanase activity, since melibiose and pullulan are not substrates. Is not able to catalyze the hydrolysis or transglycosylation of maltoheptaose, suggesting that the TK1436 protein contains neither alpha-amylase nor 4-alpha-glucanotransferase activity. This Thermococcus kodakarensis (strain ATCC BAA-918 / JCM 12380 / KOD1) (Pyrococcus kodakaraensis (strain KOD1)) protein is 1,4-alpha-glucan branching enzyme TK1436.